The primary structure comprises 329 residues: uncharacterized protein (329 aa).

A signal peptide spans 1–32; that stretch reads MSQDRGPRRPRRLEKCALISASATVLSLTASG. Residue Cys-33 is the site of N-palmitoyl cysteine attachment. A lipid anchor (S-diacylglycerol cysteine) is attached at Cys-33.

It is found in the cell membrane. This is an uncharacterized protein from Streptomyces coelicolor (strain ATCC BAA-471 / A3(2) / M145).